We begin with the raw amino-acid sequence, 357 residues long: MNDNPAVNKVFNEISSLYKQYFEYAIKVRKWLEIPDDLSHREIGYGMLKKVDNRNMSFNTDGEYLTWVLKESPFHLYKSLSYMEYPDVVGGAAKKGLFKREVAFDIDTHKTEKCTHDDSWICEECLGEARNQVLILIEDFLFPDFGLSEKDLKIVFTGNRGYHIYLKPENPELLKKIEKWGKNERRYFIEYILGKNLNLRNMGSRWKNILIREFKKNKIATKKFEKTSDWKTEIDTRKDTTRRTIYETIGKVKSRLELDEKVMDDDIRLLRTIGSLHGYTGLMVKEITYSSLKNNQFDPLNHGVFSKFHKIMYKVNIKQEIDPLTLKGDTFDHKSTEIPASYLLFLFGHGIDFEILE.

Residues aspartate 105, aspartate 107, and aspartate 259 contribute to the active site.

The protein belongs to the eukaryotic-type primase small subunit family. In terms of assembly, heterodimer of a small subunit (PriS) and a large subunit (PriL). Requires Mg(2+) as cofactor. Mn(2+) serves as cofactor.

In terms of biological role, catalytic subunit of DNA primase, an RNA polymerase that catalyzes the synthesis of short RNA molecules used as primers for DNA polymerase during DNA replication. The small subunit contains the primase catalytic core and has DNA synthesis activity on its own. Binding to the large subunit stabilizes and modulates the activity, increasing the rate of DNA synthesis while decreasing the length of the DNA fragments, and conferring RNA synthesis capability. The DNA polymerase activity may enable DNA primase to also catalyze primer extension after primer synthesis. May also play a role in DNA repair. This Methanococcus maripaludis (strain C6 / ATCC BAA-1332) protein is DNA primase small subunit PriS.